The primary structure comprises 551 residues: uncharacterized protein (551 aa).

Over 1–7 (MKKNSSV) the chain is Cytoplasmic. A helical membrane pass occupies residues 8 to 28 (VFFLVGLSQFVTMAFLIIGSI). The Vacuolar portion of the chain corresponds to 29 to 88 (TAPIFKQIGYSKYDEITYGTFGYCKEGSCSKASYNYHPDELSDSDSNWKLNSNARSILGK). A helical transmembrane segment spans residues 89 to 109 (IIFITPIAAGLNFLGFLCTIM). At 110–135 (SVLLINVLSSDRVGSASAIMFFVNLT) the chain is on the cytoplasmic side. The chain crosses the membrane as a helical span at residues 136–156 (FSTLGFLSASLICIVVFLLFY). The Vacuolar segment spans residues 157-160 (PHVT). Residues 161–181 (WCSWVLIPGAALSLLVIPLIF) form a helical membrane-spanning segment. Residues 182 to 551 (SAYSRSSGSR…TSLNNPYGFR (370 aa)) lie on the Cytoplasmic side of the membrane. A phosphoserine mark is found at S224 and S232. The tract at residues 280–341 (AKDMENSNGS…NGSNTSNNIN (62 aa)) is disordered. Polar residues predominate over residues 307-320 (TSTYSVIESESGLK). Over residues 321 to 341 (NGSVSNNYVRNNGSNTSNNIN) the composition is skewed to low complexity. Residue S363 is modified to Phosphoserine.

In terms of assembly, forms homo dimers or homooligomers in MCC microdomains. Interacts with BOI2 and RHO3, two key regulators of secretion.

The protein localises to the vacuole membrane. Its subcellular location is the cell membrane. Its function is as follows. Protein involved in secretion and cell wall organization. Contributes to cell surface-related functions as a auxiliary component of MCC/eisosome that specifically interacts with the secretory pathway. This is an uncharacterized protein from Saccharomyces cerevisiae (strain ATCC 204508 / S288c) (Baker's yeast).